Reading from the N-terminus, the 378-residue chain is Ribosomal RNA large subunit methyltransferase G (378 aa).

It belongs to the methyltransferase superfamily. RlmG family.

The protein localises to the cytoplasm. It catalyses the reaction guanosine(1835) in 23S rRNA + S-adenosyl-L-methionine = N(2)-methylguanosine(1835) in 23S rRNA + S-adenosyl-L-homocysteine + H(+). Its function is as follows. Specifically methylates the guanine in position 1835 (m2G1835) of 23S rRNA. The sequence is that of Ribosomal RNA large subunit methyltransferase G from Escherichia coli O6:K15:H31 (strain 536 / UPEC).